Consider the following 283-residue polypeptide: NADPH-dependent 7-cyano-7-deazaguanine reductase (283 aa).

Residue 89–91 (IES) coordinates substrate. 91–92 (SK) is a binding site for NADPH. Cys-190 acts as the Thioimide intermediate in catalysis. The active-site Proton donor is Asp-197. Residue 229-230 (HE) participates in substrate binding. 258–259 (RG) serves as a coordination point for NADPH.

The protein belongs to the GTP cyclohydrolase I family. QueF type 2 subfamily. In terms of assembly, homodimer.

It localises to the cytoplasm. It catalyses the reaction 7-aminomethyl-7-carbaguanine + 2 NADP(+) = 7-cyano-7-deazaguanine + 2 NADPH + 3 H(+). Its pathway is tRNA modification; tRNA-queuosine biosynthesis. In terms of biological role, catalyzes the NADPH-dependent reduction of 7-cyano-7-deazaguanine (preQ0) to 7-aminomethyl-7-deazaguanine (preQ1). The sequence is that of NADPH-dependent 7-cyano-7-deazaguanine reductase from Aromatoleum aromaticum (strain DSM 19018 / LMG 30748 / EbN1) (Azoarcus sp. (strain EbN1)).